The primary structure comprises 397 residues: Acetate kinase 2 (397 aa).

A Mg(2+)-binding site is contributed by Asn-8. Lys-15 contacts ATP. Arg-89 lines the substrate pocket. Catalysis depends on Asp-146, which acts as the Proton donor/acceptor. ATP contacts are provided by residues 206 to 210 (HLGNG), 281 to 283 (DLR), and 329 to 333 (GIGEN). Mg(2+) is bound at residue Glu-382.

Belongs to the acetokinase family. In terms of assembly, homodimer. Requires Mg(2+) as cofactor. The cofactor is Mn(2+).

Its subcellular location is the cytoplasm. The catalysed reaction is acetate + ATP = acetyl phosphate + ADP. It participates in metabolic intermediate biosynthesis; acetyl-CoA biosynthesis; acetyl-CoA from acetate: step 1/2. Catalyzes the formation of acetyl phosphate from acetate and ATP. Can also catalyze the reverse reaction. The chain is Acetate kinase 2 from Listeria monocytogenes serotype 4b (strain F2365).